A 403-amino-acid chain; its full sequence is Na(+)-translocating NADH-quinone reductase subunit B (403 aa).

Helical transmembrane passes span 56–76 (IMIMVWAATFPAMFYGMYNIG), 114–134 (LAMFLYGACFFLPIYAVTFIV), and 165–185 (LPATIPLWQVALGITFGVVIA). An FMN phosphoryl threonine modification is found at T231. A run of 5 helical transmembrane segments spans residues 260–280 (GSVGEVSSLAILLGGLFIIYM), 287–307 (IVLGVLLGGAVFSTLLNVIGS), 312–332 (MFAMPWYWHVVTGGFAFGMFF), 348–368 (WAYGFLIGLMCVLIRVLNPAF), and 371–391 (GMMLAILFANLWAPLFDYFVA).

Belongs to the NqrB/RnfD family. In terms of assembly, composed of six subunits; NqrA, NqrB, NqrC, NqrD, NqrE and NqrF. FMN serves as cofactor.

It is found in the cell inner membrane. It catalyses the reaction a ubiquinone + n Na(+)(in) + NADH + H(+) = a ubiquinol + n Na(+)(out) + NAD(+). Its function is as follows. NQR complex catalyzes the reduction of ubiquinone-1 to ubiquinol by two successive reactions, coupled with the transport of Na(+) ions from the cytoplasm to the periplasm. NqrA to NqrE are probably involved in the second step, the conversion of ubisemiquinone to ubiquinol. In Pseudoalteromonas atlantica (strain T6c / ATCC BAA-1087), this protein is Na(+)-translocating NADH-quinone reductase subunit B.